Reading from the N-terminus, the 465-residue chain is Siroheme synthase (465 aa).

Residues 1–203 (MDFLPLFHSL…GRPAEAERLL (203 aa)) form a precorrin-2 dehydrogenase /sirohydrochlorin ferrochelatase region. Residues 22–23 (EV) and 43–44 (PQ) contribute to the NAD(+) site. Serine 128 bears the Phosphoserine mark. The interval 217-465 (GEVYLVGAGP…AWFEGAREGA (249 aa)) is uroporphyrinogen-III C-methyltransferase. Residue proline 226 coordinates S-adenosyl-L-methionine. Residue aspartate 249 is the Proton acceptor of the active site. Lysine 271 functions as the Proton donor in the catalytic mechanism. S-adenosyl-L-methionine-binding positions include 302 to 304 (GGD), isoleucine 307, 332 to 333 (TA), methionine 384, and glycine 413.

This sequence in the N-terminal section; belongs to the precorrin-2 dehydrogenase / sirohydrochlorin ferrochelatase family. In the C-terminal section; belongs to the precorrin methyltransferase family.

The catalysed reaction is uroporphyrinogen III + 2 S-adenosyl-L-methionine = precorrin-2 + 2 S-adenosyl-L-homocysteine + H(+). It carries out the reaction precorrin-2 + NAD(+) = sirohydrochlorin + NADH + 2 H(+). It catalyses the reaction siroheme + 2 H(+) = sirohydrochlorin + Fe(2+). The protein operates within cofactor biosynthesis; adenosylcobalamin biosynthesis; precorrin-2 from uroporphyrinogen III: step 1/1. It participates in cofactor biosynthesis; adenosylcobalamin biosynthesis; sirohydrochlorin from precorrin-2: step 1/1. It functions in the pathway porphyrin-containing compound metabolism; siroheme biosynthesis; precorrin-2 from uroporphyrinogen III: step 1/1. Its pathway is porphyrin-containing compound metabolism; siroheme biosynthesis; siroheme from sirohydrochlorin: step 1/1. The protein operates within porphyrin-containing compound metabolism; siroheme biosynthesis; sirohydrochlorin from precorrin-2: step 1/1. Its function is as follows. Multifunctional enzyme that catalyzes the SAM-dependent methylations of uroporphyrinogen III at position C-2 and C-7 to form precorrin-2 via precorrin-1. Then it catalyzes the NAD-dependent ring dehydrogenation of precorrin-2 to yield sirohydrochlorin. Finally, it catalyzes the ferrochelation of sirohydrochlorin to yield siroheme. This chain is Siroheme synthase, found in Pseudomonas paraeruginosa (strain DSM 24068 / PA7) (Pseudomonas aeruginosa (strain PA7)).